A 686-amino-acid polypeptide reads, in one-letter code: MAPWSGFWAASRPALAAAAAGGTPVVVKMDNPNWSISEIDADGGEFLAGGRRRGRGKNAKQITWVLLLKAHRAAGCLAWLASAAVALGAAARRRVAAGRTDDADAETPAPRSRLYAFIRASLLLSVFLLAVELAAHANGRGRVLAASVDSFHSSWVRFRAAYVAPPLQLLADACVVLFLVQSADRLVQCLGCLYIHLNRIKPKPISSPAAAAAALPDLEDPDAGDYYPMVLVQIPMCNEKEVYQQSIAAVCNLDWPRSNILVQVLDDSDDPITQSLIKEEVEKWRQNGARIVYRHRVLREGYKAGNLKSAMSCSYVKDYEYVAIFDADFQPYPDFLKRTVPHFKDNEELGLVQARWSFVNKDENLLTRLQNINLCFHFEVEQQVNGIFINFFGFNGTAGVWRIKALEDSGGWMERTTVEDMDIAVRAHLNGWKFVFLNDVECQCELPESYEAYRKQQHRWHSGPMQLFRLCLPDIIRCKIAFWKKANLIFLFFLLRKLILPFYSFTLFCIILPMTMFIPEAELPDWVVCYIPALMSFLNILPAPKSFPFIIPYLLFENTMSVTKFNAMISGLFQLGSAYEWVVTKKSGRSSEGDLIALAPKELKQQKILDLTAIKEQSMLKQSSPRNEAKKKYNRIYKKELALSLLLLTAAARSLLSKQGIHFYFLMFQGLSFLLVGLDLIGEDVK.

The next 2 helical transmembrane spans lie at 114–134 and 160–180; these read LYAF…VELA and AAYV…LFLV. D267 is an active-site residue. Substrate contacts are provided by D326 and D328. The active site involves D420. 4 helical membrane-spanning segments follow: residues 498 to 518, 523 to 543, 640 to 656, and 661 to 681; these read LILP…TMFI, LPDW…ILPA, ELAL…RSLL, and IHFY…LDLI.

Belongs to the glycosyltransferase 2 family. Plant cellulose synthase-like C subfamily.

It localises to the golgi apparatus membrane. Its function is as follows. Probable beta-1,4-glucan synthase rather involved in the synthesis of the xyloglucan backbone than cellulose. Seems to work simultaneously with xyloglucan 6-xylosyltransferase. Xyloglucan is a noncellulosic polysaccharides of plant cell wall and consists of a glucan backbone substituted by xylose, galactose and fucose. This Oryza sativa subsp. indica (Rice) protein is Putative xyloglucan glycosyltransferase 10 (CSLC10).